Consider the following 488-residue polypeptide: Ribulose bisphosphate carboxylase large chain (488 aa).

Residues Asn-128 and Thr-178 each contribute to the substrate site. Residue Lys-180 is the Proton acceptor of the active site. Lys-182 contributes to the substrate binding site. Residues Lys-206, Asp-208, and Glu-209 each coordinate Mg(2+). Position 206 is an N6-carboxylysine (Lys-206). The active-site Proton acceptor is His-298. Substrate-binding residues include Arg-299, His-331, and Ser-383.

The protein belongs to the RuBisCO large chain family. Type I subfamily. As to quaternary structure, heterohexadecamer of 8 large chains and 8 small chains. The cofactor is Mg(2+).

It catalyses the reaction 2 (2R)-3-phosphoglycerate + 2 H(+) = D-ribulose 1,5-bisphosphate + CO2 + H2O. The catalysed reaction is D-ribulose 1,5-bisphosphate + O2 = 2-phosphoglycolate + (2R)-3-phosphoglycerate + 2 H(+). In terms of biological role, ruBisCO catalyzes two reactions: the carboxylation of D-ribulose 1,5-bisphosphate, the primary event in carbon dioxide fixation, as well as the oxidative fragmentation of the pentose substrate. Both reactions occur simultaneously and in competition at the same active site. This Xanthobacter autotrophicus (strain ATCC BAA-1158 / Py2) protein is Ribulose bisphosphate carboxylase large chain.